Here is a 661-residue protein sequence, read N- to C-terminus: FAST kinase domain-containing protein 3, mitochondrial (661 aa).

Residues 592-650 form the RAP domain; it reads VALCIDGPQRFCLDSKHLLGKEATKQRHLRLLGYQVVQLPYHELELLTSRLELVDYLQR.

Belongs to the FAST kinase family. In terms of tissue distribution, expression detected in spleen, testis, colon, heart, smooth muscle, kidney, brain, lung, liver, brown and white adipose tissue with highest expression in testis and smooth muscle.

It localises to the mitochondrion. Required for normal mitochondrial respiration. Increases steady-state levels and half-lives of a subset of mature mitochondrial mRNAs MT-ND2, MT-ND3, MT-CYTB, MT-CO2, and MT-ATP8/6. Promotes MT-CO1 mRNA translation and increases mitochondrial complex IV assembly and activity. The sequence is that of FAST kinase domain-containing protein 3, mitochondrial (Fastkd3) from Mus musculus (Mouse).